A 116-amino-acid chain; its full sequence is Iron-sulfur cluster insertion protein ErpA (116 aa).

Cysteine 44, cysteine 108, and cysteine 110 together coordinate iron-sulfur cluster.

The protein belongs to the HesB/IscA family. As to quaternary structure, homodimer. It depends on iron-sulfur cluster as a cofactor.

Functionally, required for insertion of 4Fe-4S clusters for at least IspG. This is Iron-sulfur cluster insertion protein ErpA from Idiomarina loihiensis (strain ATCC BAA-735 / DSM 15497 / L2-TR).